A 431-amino-acid polypeptide reads, in one-letter code: BEL1-like homeodomain protein 5 (431 aa).

The SR/KY domain stretch occupies residues 80–96 (PIYLKAAQELLNEIVNV). Positions 128–199 (GVAALQMKKA…AVKDMISLQI (72 aa)) are BELL domain. The homeobox DNA-binding region spans 228-290 (AWRPQRGLPE…NARVRMWKPL (63 aa)). Positions 302-312 (EESRKGSDRYS) are enriched in basic and acidic residues. The tract at residues 302 to 333 (EESRKGSDRYSTKGSSSKQPYNNTTSNESSNT) is disordered. Residues 313-322 (TKGSSSKQPY) show a composition bias toward polar residues. Residues 323-333 (NNTTSNESSNT) show a composition bias toward low complexity.

Belongs to the TALE/BELL homeobox family. As to quaternary structure, may form heterodimeric complexes with TALE/KNOX proteins. Interacts with OFP1.

Its subcellular location is the nucleus. The polypeptide is BEL1-like homeodomain protein 5 (BLH5) (Arabidopsis thaliana (Mouse-ear cress)).